An 85-amino-acid chain; its full sequence is Beta-toxin Ct6 (85 aa).

Positions 1–18 (MKTFVLALCLVLIGMVYA) are cleaved as a signal peptide. The region spanning 19–84 (KDGYLVSKHT…VYPLPNKSCG (66 aa)) is the LCN-type CS-alpha/beta domain. Intrachain disulfides connect cysteine 30–cysteine 83, cysteine 34–cysteine 59, cysteine 43–cysteine 64, and cysteine 47–cysteine 66. Residue cysteine 83 is modified to Cysteine amide.

The protein belongs to the long (4 C-C) scorpion toxin superfamily. Sodium channel inhibitor family. Beta subfamily. In terms of tissue distribution, expressed by the venom gland.

The protein resides in the secreted. Functionally, beta toxins bind voltage-independently at site-4 of sodium channels (Nav) and shift the voltage of activation toward more negative potentials thereby affecting sodium channel activation and promoting spontaneous and repetitive firing. In Centruroides tecomanus (Scorpion), this protein is Beta-toxin Ct6.